We begin with the raw amino-acid sequence, 72 residues long: DNA-directed RNA polymerase subunit omega (72 aa).

This sequence belongs to the RNA polymerase subunit omega family. In terms of assembly, the RNAP catalytic core consists of 2 alpha, 1 beta, 1 beta' and 1 omega subunit. When a sigma factor is associated with the core the holoenzyme is formed, which can initiate transcription.

The catalysed reaction is RNA(n) + a ribonucleoside 5'-triphosphate = RNA(n+1) + diphosphate. Its function is as follows. Promotes RNA polymerase assembly. Latches the N- and C-terminal regions of the beta' subunit thereby facilitating its interaction with the beta and alpha subunits. This chain is DNA-directed RNA polymerase subunit omega, found in Clostridium botulinum (strain Langeland / NCTC 10281 / Type F).